The primary structure comprises 435 residues: Light-independent protochlorophyllide reductase subunit N (435 aa).

Residues Cys-23, Cys-48, and Cys-108 each coordinate [4Fe-4S] cluster.

Belongs to the BchN/ChlN family. As to quaternary structure, protochlorophyllide reductase is composed of three subunits; ChlL, ChlN and ChlB. Forms a heterotetramer of two ChlB and two ChlN subunits. The cofactor is [4Fe-4S] cluster.

It localises to the plastid. The protein resides in the chloroplast. It catalyses the reaction chlorophyllide a + oxidized 2[4Fe-4S]-[ferredoxin] + 2 ADP + 2 phosphate = protochlorophyllide a + reduced 2[4Fe-4S]-[ferredoxin] + 2 ATP + 2 H2O. It participates in porphyrin-containing compound metabolism; chlorophyll biosynthesis (light-independent). Component of the dark-operative protochlorophyllide reductase (DPOR) that uses Mg-ATP and reduced ferredoxin to reduce ring D of protochlorophyllide (Pchlide) to form chlorophyllide a (Chlide). This reaction is light-independent. The NB-protein (ChlN-ChlB) is the catalytic component of the complex. The protein is Light-independent protochlorophyllide reductase subunit N of Auxenochlorella protothecoides (Green microalga).